A 289-amino-acid polypeptide reads, in one-letter code: Phosphate import ATP-binding protein PstB (289 aa).

The interval 1 to 37 (MRSIDRPGGQAARPTIGSVAGASNTRTRDARSLPDTP) is disordered. The ABC transporter domain maps to 41–284 (AAAENFSFYY…PVRRETEDYI (244 aa)). ATP is bound at residue 73–80 (GPSGCGKS).

The protein belongs to the ABC transporter superfamily. Phosphate importer (TC 3.A.1.7) family. The complex is composed of two ATP-binding proteins (PstB), two transmembrane proteins (PstC and PstA) and a solute-binding protein (PstS).

It localises to the cell inner membrane. The enzyme catalyses phosphate(out) + ATP + H2O = ADP + 2 phosphate(in) + H(+). In terms of biological role, part of the ABC transporter complex PstSACB involved in phosphate import. Responsible for energy coupling to the transport system. The polypeptide is Phosphate import ATP-binding protein PstB (Aromatoleum aromaticum (strain DSM 19018 / LMG 30748 / EbN1) (Azoarcus sp. (strain EbN1))).